The sequence spans 177 residues: ATP synthase subunit b, chloroplastic (177 aa).

A helical transmembrane segment spans residues 22-42; the sequence is ILETNIINLAAVVGIVVFFVG.

Belongs to the ATPase B chain family. In terms of assembly, F-type ATPases have 2 components, F(1) - the catalytic core - and F(0) - the membrane proton channel. F(1) has five subunits: alpha(3), beta(3), gamma(1), delta(1), epsilon(1). F(0) has four main subunits: a(1), b(1), b'(1) and c(10-14). The alpha and beta chains form an alternating ring which encloses part of the gamma chain. F(1) is attached to F(0) by a central stalk formed by the gamma and epsilon chains, while a peripheral stalk is formed by the delta, b and b' chains.

It is found in the plastid. It localises to the chloroplast thylakoid membrane. In terms of biological role, f(1)F(0) ATP synthase produces ATP from ADP in the presence of a proton or sodium gradient. F-type ATPases consist of two structural domains, F(1) containing the extramembraneous catalytic core and F(0) containing the membrane proton channel, linked together by a central stalk and a peripheral stalk. During catalysis, ATP synthesis in the catalytic domain of F(1) is coupled via a rotary mechanism of the central stalk subunits to proton translocation. Component of the F(0) channel, it forms part of the peripheral stalk, linking F(1) to F(0). This is ATP synthase subunit b, chloroplastic from Oedogonium cardiacum (Filamentous green alga).